We begin with the raw amino-acid sequence, 170 residues long: Peptide deformylase (170 aa).

Residues Cys94 and His136 each coordinate Fe cation. Glu137 is an active-site residue. Residue His140 coordinates Fe cation.

The protein belongs to the polypeptide deformylase family. Requires Fe(2+) as cofactor.

The catalysed reaction is N-terminal N-formyl-L-methionyl-[peptide] + H2O = N-terminal L-methionyl-[peptide] + formate. Its function is as follows. Removes the formyl group from the N-terminal Met of newly synthesized proteins. Requires at least a dipeptide for an efficient rate of reaction. N-terminal L-methionine is a prerequisite for activity but the enzyme has broad specificity at other positions. This chain is Peptide deformylase, found in Stenotrophomonas maltophilia (strain R551-3).